The following is a 459-amino-acid chain: Putative flavin-containing monooxygenase 2 (459 aa).

FAD contacts are provided by residues glycine 17–serine 21, glutamate 38, and valine 46–tryptophan 47. Residue serine 217–aspartate 220 participates in NADP(+) binding.

It belongs to the FMO family. FAD serves as cofactor.

The sequence is that of Putative flavin-containing monooxygenase 2 (FMO2) from Arabidopsis thaliana (Mouse-ear cress).